The sequence spans 501 residues: Cyclin-dependent kinase 19 (501 aa).

Met-1 carries the N-acetylmethionine modification. One can recognise a Protein kinase domain in the interval 21 to 335 (EYEGCKVGRG…SEQALQDPYF (315 aa)). Residues 27 to 35 (VGRGTYGHV) and Lys-52 each bind ATP. Asp-151 functions as the Proton acceptor in the catalytic mechanism. The segment at 362–501 (DEPEEKGDKN…YHSSHQTHRY (140 aa)) is disordered. A compositionally biased stretch (low complexity) spans 371-392 (NQPQQQNPHQQPAAPAQQTAAP). Residues 408-421 (TAGGATAGGGGAGA) show a composition bias toward gly residues. Ser-449 is modified (phosphoserine). Positions 467–495 (YQSSVQGSSQSQSTLGYSSSQQSTQYHSS) are enriched in low complexity.

Belongs to the protein kinase superfamily. CMGC Ser/Thr protein kinase family. CDC2/CDKX subfamily.

Its subcellular location is the cytoplasm. It localises to the perinuclear region. The protein localises to the nucleus. The enzyme catalyses L-seryl-[protein] + ATP = O-phospho-L-seryl-[protein] + ADP + H(+). It carries out the reaction L-threonyl-[protein] + ATP = O-phospho-L-threonyl-[protein] + ADP + H(+). This Mus musculus (Mouse) protein is Cyclin-dependent kinase 19 (Cdk19).